The sequence spans 159 residues: MADS-box transcription factor 23 (159 aa).

An MADS-box domain is found at 1-61; it reads MGRGKIEIKR…SRLYDFASSS (61 aa). Residues 86 to 159 enclose the K-box domain; it reads AKLWQQEAAS…QELSRKVVTT (74 aa).

As to expression, expressed in seedling roots and developing seeds.

The protein localises to the nucleus. Functionally, probable transcription factor. In Oryza sativa subsp. japonica (Rice), this protein is MADS-box transcription factor 23 (MADS23).